Here is a 381-residue protein sequence, read N- to C-terminus: Alkanesulfonate monooxygenase (381 aa).

This sequence belongs to the SsuD family. Homotetramer.

The catalysed reaction is an alkanesulfonate + FMNH2 + O2 = an aldehyde + FMN + sulfite + H2O + 2 H(+). Functionally, catalyzes the desulfonation of aliphatic sulfonates. The protein is Alkanesulfonate monooxygenase of Escherichia coli O157:H7.